We begin with the raw amino-acid sequence, 357 residues long: Putative F-box protein At5g50220 (357 aa).

The F-box domain maps to 27–73 (IAEDIGIPIDLMVEILKKLPAKSLIKFQCVSKQWSSIIGSSRDFIDS).

The sequence is that of Putative F-box protein At5g50220 from Arabidopsis thaliana (Mouse-ear cress).